The following is an 84-amino-acid chain: Defensin-like protein 49 (84 aa).

Residues M1–G29 form the signal peptide. Disulfide bonds link C40–C82, C44–C68, C54–C80, and C58–C81.

Belongs to the DEFL family.

The protein localises to the secreted. The chain is Defensin-like protein 49 from Arabidopsis thaliana (Mouse-ear cress).